The primary structure comprises 122 residues: S-protein homolog 23 (122 aa).

The N-terminal stretch at M1–S20 is a signal peptide. N-linked (GlcNAc...) asparagine glycosylation occurs at N86.

This sequence belongs to the plant self-incompatibility (S1) protein family.

The protein resides in the secreted. This is S-protein homolog 23 from Arabidopsis thaliana (Mouse-ear cress).